A 316-amino-acid chain; its full sequence is Lipoyl synthase (316 aa).

[4Fe-4S] cluster-binding residues include Cys66, Cys71, Cys77, Cys92, Cys96, Cys99, and Ser306. The Radical SAM core domain maps to 78–295 (FNRGTATFMI…NLIAFDLGFK (218 aa)).

This sequence belongs to the radical SAM superfamily. Lipoyl synthase family. Requires [4Fe-4S] cluster as cofactor.

The protein resides in the cytoplasm. It carries out the reaction [[Fe-S] cluster scaffold protein carrying a second [4Fe-4S](2+) cluster] + N(6)-octanoyl-L-lysyl-[protein] + 2 oxidized [2Fe-2S]-[ferredoxin] + 2 S-adenosyl-L-methionine + 4 H(+) = [[Fe-S] cluster scaffold protein] + N(6)-[(R)-dihydrolipoyl]-L-lysyl-[protein] + 4 Fe(3+) + 2 hydrogen sulfide + 2 5'-deoxyadenosine + 2 L-methionine + 2 reduced [2Fe-2S]-[ferredoxin]. It participates in protein modification; protein lipoylation via endogenous pathway; protein N(6)-(lipoyl)lysine from octanoyl-[acyl-carrier-protein]: step 2/2. In terms of biological role, catalyzes the radical-mediated insertion of two sulfur atoms into the C-6 and C-8 positions of the octanoyl moiety bound to the lipoyl domains of lipoate-dependent enzymes, thereby converting the octanoylated domains into lipoylated derivatives. This chain is Lipoyl synthase, found in Wigglesworthia glossinidia brevipalpis.